Consider the following 190-residue polypeptide: Large ribosomal subunit protein bL25 (190 aa).

Positions 1-20 are disordered; it reads MSEQKTLSVQKRDNLGKGAN.

Belongs to the bacterial ribosomal protein bL25 family. CTC subfamily. As to quaternary structure, part of the 50S ribosomal subunit; part of the 5S rRNA/L5/L18/L25 subcomplex. Contacts the 5S rRNA. Binds to the 5S rRNA independently of L5 and L18.

Functionally, this is one of the proteins that binds to the 5S RNA in the ribosome where it forms part of the central protuberance. This chain is Large ribosomal subunit protein bL25, found in Nitratidesulfovibrio vulgaris (strain ATCC 29579 / DSM 644 / CCUG 34227 / NCIMB 8303 / VKM B-1760 / Hildenborough) (Desulfovibrio vulgaris).